We begin with the raw amino-acid sequence, 312 residues long: MEMDTAVENPAVEKNGQPTPSSTSTATDAAPTPNAPNRPAPNTAGNRKRGVPEGVWRKCDSCGASLFYKEVQQRLNVCPQCDHHFYVSAWERVAQVLDDGTFEPMNEHLRPTDPLEFRDRRSYAERLVGEQKRTGLTDAVLTGTGMIRARRVAFAVTDSAFIMGSMGSVVGERLTRLIERATEQNLALIIISASGGGARMHEGILSLMQMAKVSAALSRYHAAGGLFISVLTNPTMGGVAASFASLGDLVFAEPKALIGFAGPRTIKATIGIELPEGFQTSEFLLEHGYIDRIVHRKSLKTEIATAIDYCGK.

Positions 1–52 (MEMDTAVENPAVEKNGQPTPSSTSTATDAAPTPNAPNRPAPNTAGNRKRGVP) are disordered. Residues 18–32 (PTPSSTSTATDAAPT) show a composition bias toward low complexity. One can recognise a CoA carboxyltransferase N-terminal domain in the interval 55–312 (VWRKCDSCGA…IATAIDYCGK (258 aa)). Residues C59, C62, C78, and C81 each coordinate Zn(2+). A C4-type zinc finger spans residues 59-81 (CDSCGASLFYKEVQQRLNVCPQC).

Belongs to the AccD/PCCB family. In terms of assembly, acetyl-CoA carboxylase is a heterohexamer composed of biotin carboxyl carrier protein (AccB), biotin carboxylase (AccC) and two subunits each of ACCase subunit alpha (AccA) and ACCase subunit beta (AccD). Requires Zn(2+) as cofactor.

The protein resides in the cytoplasm. It carries out the reaction N(6)-carboxybiotinyl-L-lysyl-[protein] + acetyl-CoA = N(6)-biotinyl-L-lysyl-[protein] + malonyl-CoA. The protein operates within lipid metabolism; malonyl-CoA biosynthesis; malonyl-CoA from acetyl-CoA: step 1/1. Its function is as follows. Component of the acetyl coenzyme A carboxylase (ACC) complex. Biotin carboxylase (BC) catalyzes the carboxylation of biotin on its carrier protein (BCCP) and then the CO(2) group is transferred by the transcarboxylase to acetyl-CoA to form malonyl-CoA. The polypeptide is Acetyl-coenzyme A carboxylase carboxyl transferase subunit beta (Rhodopirellula baltica (strain DSM 10527 / NCIMB 13988 / SH1)).